A 166-amino-acid chain; its full sequence is Small ribosomal subunit protein eS10 (166 aa).

Residues 95–166 (RRQTRPETAR…FGRGRGQQPQ (72 aa)) form a disordered region. A compositionally biased stretch (basic and acidic residues) spans 98 to 129 (TRPETARPRPKGLEGERPARLARGEGDRDAYR). Residues 143-154 (AGAGAATEFQFR) show a composition bias toward low complexity. The span at 155-166 (GGFGRGRGQQPQ) shows a compositional bias: gly residues.

This sequence belongs to the eukaryotic ribosomal protein eS10 family. Component of the small ribosomal subunit.

It localises to the cytoplasm. The protein localises to the nucleus. Its subcellular location is the nucleolus. In terms of biological role, component of the 40S ribosomal subunit. The ribosome is a large ribonucleoprotein complex responsible for the synthesis of proteins in the cell. This is Small ribosomal subunit protein eS10 (rps10) from Ictalurus punctatus (Channel catfish).